A 719-amino-acid chain; its full sequence is Polyribonucleotide nucleotidyltransferase (719 aa).

Positions 487 and 493 each coordinate Mg(2+). Residues 554 to 613 (PRIETFKIATDKIREVIGTGGKVIREIVEKTGAKVNIEDDGTVKVASSDGEAMKAAIKWI) enclose the KH domain. An S1 motif domain is found at 623–691 (GQIYDGTVVK…DRGKTRLSMK (69 aa)). The disordered stretch occupies residues 691 to 719 (KVVDQTTGEDLEAKQKDAPAEAPREAAGE). Residues 701–719 (LEAKQKDAPAEAPREAAGE) are compositionally biased toward basic and acidic residues.

Belongs to the polyribonucleotide nucleotidyltransferase family. The cofactor is Mg(2+).

It localises to the cytoplasm. The catalysed reaction is RNA(n+1) + phosphate = RNA(n) + a ribonucleoside 5'-diphosphate. Its function is as follows. Involved in mRNA degradation. Catalyzes the phosphorolysis of single-stranded polyribonucleotides processively in the 3'- to 5'-direction. The chain is Polyribonucleotide nucleotidyltransferase from Bradyrhizobium sp. (strain ORS 278).